Reading from the N-terminus, the 52-residue chain is ATP synthase protein 8 (52 aa).

Residues 7–27 form a helical membrane-spanning segment; it reads MKWFLIYFIYLLIFYLFIMLI.

The protein belongs to the ATPase protein 8 family. F-type ATPases have 2 components, CF(1) - the catalytic core - and CF(0) - the membrane proton channel.

Its subcellular location is the mitochondrion membrane. Mitochondrial membrane ATP synthase (F(1)F(0) ATP synthase or Complex V) produces ATP from ADP in the presence of a proton gradient across the membrane which is generated by electron transport complexes of the respiratory chain. F-type ATPases consist of two structural domains, F(1) - containing the extramembraneous catalytic core and F(0) - containing the membrane proton channel, linked together by a central stalk and a peripheral stalk. During catalysis, ATP synthesis in the catalytic domain of F(1) is coupled via a rotary mechanism of the central stalk subunits to proton translocation. Part of the complex F(0) domain. Minor subunit located with subunit a in the membrane. In Apis mellifera ligustica (Common honeybee), this protein is ATP synthase protein 8 (mt:ATPase8).